The primary structure comprises 173 residues: Telomerase RNA component interacting RNase (173 aa).

A compositionally biased stretch (basic and acidic residues) spans 1–12; sequence MAARGRRAEPPG. The segment at 1–119 is disordered; it reads MAARGRRAEP…LSFVGKRRGG (119 aa). Low complexity-rich tracts occupy residues 14–23 and 43–52; these read EAPGPAGSGR and SGSSPVSSGV. Basic and acidic residues predominate over residues 64-79; the sequence is LFKRKMEEEQRQRQEE. A compositionally biased stretch (pro residues) spans 80-90; the sequence is PPPGPQRPDPP. Residue Lys-143 is modified to N6-acetyllysine.

In terms of assembly, part of the telomerase RNA 3' end complex which contains about 488 proteins.

Functionally, exoribonuclease that is part of the telomerase RNA 3' end processing complex and which has the ability to cleave all four unpaired RNA nucleotides from the 5' end or 3' end with higher efficiency for purine bases. The chain is Telomerase RNA component interacting RNase from Mus musculus (Mouse).